The sequence spans 337 residues: 4-hydroxy-3-methylbut-2-enyl diphosphate reductase (337 aa).

[4Fe-4S] cluster is bound at residue Cys-25. The (2E)-4-hydroxy-3-methylbut-2-enyl diphosphate site is built by His-54 and His-87. Positions 54 and 87 each coordinate dimethylallyl diphosphate. Isopentenyl diphosphate-binding residues include His-54 and His-87. Cys-109 contacts [4Fe-4S] cluster. A (2E)-4-hydroxy-3-methylbut-2-enyl diphosphate-binding site is contributed by His-137. His-137 is a binding site for dimethylallyl diphosphate. His-137 contacts isopentenyl diphosphate. Glu-139 (proton donor) is an active-site residue. Residue Thr-177 coordinates (2E)-4-hydroxy-3-methylbut-2-enyl diphosphate. Cys-207 is a [4Fe-4S] cluster binding site. Positions 235, 236, 237, and 280 each coordinate (2E)-4-hydroxy-3-methylbut-2-enyl diphosphate. Residues Ser-235, Ser-236, Asn-237, and Ser-280 each contribute to the dimethylallyl diphosphate site. 4 residues coordinate isopentenyl diphosphate: Ser-235, Ser-236, Asn-237, and Ser-280.

It belongs to the IspH family. [4Fe-4S] cluster serves as cofactor.

The enzyme catalyses isopentenyl diphosphate + 2 oxidized [2Fe-2S]-[ferredoxin] + H2O = (2E)-4-hydroxy-3-methylbut-2-enyl diphosphate + 2 reduced [2Fe-2S]-[ferredoxin] + 2 H(+). It carries out the reaction dimethylallyl diphosphate + 2 oxidized [2Fe-2S]-[ferredoxin] + H2O = (2E)-4-hydroxy-3-methylbut-2-enyl diphosphate + 2 reduced [2Fe-2S]-[ferredoxin] + 2 H(+). Its pathway is isoprenoid biosynthesis; dimethylallyl diphosphate biosynthesis; dimethylallyl diphosphate from (2E)-4-hydroxy-3-methylbutenyl diphosphate: step 1/1. The protein operates within isoprenoid biosynthesis; isopentenyl diphosphate biosynthesis via DXP pathway; isopentenyl diphosphate from 1-deoxy-D-xylulose 5-phosphate: step 6/6. Catalyzes the conversion of 1-hydroxy-2-methyl-2-(E)-butenyl 4-diphosphate (HMBPP) into a mixture of isopentenyl diphosphate (IPP) and dimethylallyl diphosphate (DMAPP). Acts in the terminal step of the DOXP/MEP pathway for isoprenoid precursor biosynthesis. This Leifsonia xyli subsp. xyli (strain CTCB07) protein is 4-hydroxy-3-methylbut-2-enyl diphosphate reductase.